The sequence spans 260 residues: NAD-dependent protein deacetylase (260 aa).

The 252-residue stretch at 9-260 (DDIDGETLDA…QVLPAIVERL (252 aa)) folds into the Deacetylase sirtuin-type domain. Ala35, Thr39, Phe46, Arg47, Gln114, Ile116, Asp117, and His132 together coordinate NAD(+). Phe46 is a nicotinamide binding site. 2 residues coordinate nicotinamide: Ile116 and Asp117. The active-site Proton acceptor is the His132. Zn(2+) is bound by residues Cys140, Cys143, Cys166, and Cys168. The NAD(+) site is built by Ser206, Ser207, Asn231, Asp248, and Val249.

This sequence belongs to the sirtuin family. Class U subfamily. Zn(2+) serves as cofactor.

The protein localises to the cytoplasm. It carries out the reaction N(6)-acetyl-L-lysyl-[protein] + NAD(+) + H2O = 2''-O-acetyl-ADP-D-ribose + nicotinamide + L-lysyl-[protein]. Its function is as follows. NAD-dependent protein deacetylase which modulates the activities of several enzymes which are inactive in their acetylated form. Deacetylates the N-terminal lysine residue of Alba, the major archaeal chromatin protein and that, in turn, increases Alba's DNA binding affinity, thereby repressing transcription. This Haloarcula marismortui (strain ATCC 43049 / DSM 3752 / JCM 8966 / VKM B-1809) (Halobacterium marismortui) protein is NAD-dependent protein deacetylase.